A 472-amino-acid polypeptide reads, in one-letter code: Aspartyl/glutamyl-tRNA(Asn/Gln) amidotransferase subunit B (472 aa).

It belongs to the GatB/GatE family. GatB subfamily. In terms of assembly, heterotrimer of A, B and C subunits.

The enzyme catalyses L-glutamyl-tRNA(Gln) + L-glutamine + ATP + H2O = L-glutaminyl-tRNA(Gln) + L-glutamate + ADP + phosphate + H(+). It catalyses the reaction L-aspartyl-tRNA(Asn) + L-glutamine + ATP + H2O = L-asparaginyl-tRNA(Asn) + L-glutamate + ADP + phosphate + 2 H(+). Its function is as follows. Allows the formation of correctly charged Asn-tRNA(Asn) or Gln-tRNA(Gln) through the transamidation of misacylated Asp-tRNA(Asn) or Glu-tRNA(Gln) in organisms which lack either or both of asparaginyl-tRNA or glutaminyl-tRNA synthetases. The reaction takes place in the presence of glutamine and ATP through an activated phospho-Asp-tRNA(Asn) or phospho-Glu-tRNA(Gln). In Campylobacter jejuni subsp. jejuni serotype O:2 (strain ATCC 700819 / NCTC 11168), this protein is Aspartyl/glutamyl-tRNA(Asn/Gln) amidotransferase subunit B.